The sequence spans 522 residues: Coiled-coil domain-containing protein 149-B (522 aa).

Coiled coils occupy residues 1-196 (MANQ…LESK) and 260-287 (IRHQ…LEVS). Positions 413–522 (ACTAERSEQH…TSPHQECPSS (110 aa)) are disordered. Composition is skewed to polar residues over residues 429–438 (GGHQSMSTEA), 467–490 (QPVT…TAEQ), and 503–522 (ASLN…CPSS).

It belongs to the CCDC149 family.

This Danio rerio (Zebrafish) protein is Coiled-coil domain-containing protein 149-B (ccdc149b).